The primary structure comprises 374 residues: NAD-capped RNA hydrolase ndx-9 (374 aa).

Zn(2+) contacts are provided by cysteine 181, cysteine 184, cysteine 199, and cysteine 202. Residues tyrosine 207, 243-245 (AGF), glutamate 259, glutamate 263, and glutamate 307 each bind substrate. A Nudix hydrolase domain is found at 208 to 336 (PTFSPVSITL…LADPLLKNLP (129 aa)). Residues alanine 243, glutamate 259, glutamate 263, and glutamate 307 each contribute to the Mg(2+) site. The Nudix box motif lies at 244 to 265 (GFAHSGESMAECARREIAEEVG). The Microbody targeting signal motif lies at 367 to 369 (LEN).

This sequence belongs to the Nudix hydrolase family. NudC subfamily. As to quaternary structure, homodimer. Mg(2+) serves as cofactor. Mn(2+) is required as a cofactor. The cofactor is Zn(2+).

The enzyme catalyses a 5'-end NAD(+)-phospho-ribonucleoside in mRNA + H2O = a 5'-end phospho-adenosine-phospho-ribonucleoside in mRNA + beta-nicotinamide D-ribonucleotide + 2 H(+). It carries out the reaction NAD(+) + H2O = beta-nicotinamide D-ribonucleotide + AMP + 2 H(+). It catalyses the reaction NADH + H2O = reduced beta-nicotinamide D-ribonucleotide + AMP + 2 H(+). MRNA decapping enzyme that specifically removes the nicotinamide adenine dinucleotide (NAD) cap from a subset of mRNAs by hydrolyzing the diphosphate linkage to produce nicotinamide mononucleotide (NMN) and 5' monophosphate mRNA. The NAD-cap is present at the 5'-end of some RNAs; in contrast to the canonical N7 methylguanosine (m7G) cap, the NAD cap promotes mRNA decay. Mediates the hydrolysis of some nucleoside diphosphate derivatives. The protein is NAD-capped RNA hydrolase ndx-9 (ndx-9) of Caenorhabditis elegans.